A 429-amino-acid polypeptide reads, in one-letter code: Adenylosuccinate synthetase (429 aa).

Residues 12-18 (GDEGKGK) and 40-42 (GHT) contribute to the GTP site. Asp-13 acts as the Proton acceptor in catalysis. The Mg(2+) site is built by Asp-13 and Gly-40. IMP-binding positions include 13–16 (DEGK), 38–41 (NAGH), Thr-128, Arg-142, Gln-223, Thr-238, and Arg-302. His-41 functions as the Proton donor in the catalytic mechanism. 298–304 (VNTGRPR) contacts substrate. GTP is bound by residues Arg-304, 330 to 332 (KLD), and 412 to 414 (GVG).

Belongs to the adenylosuccinate synthetase family. In terms of assembly, homodimer. The cofactor is Mg(2+).

Its subcellular location is the cytoplasm. The catalysed reaction is IMP + L-aspartate + GTP = N(6)-(1,2-dicarboxyethyl)-AMP + GDP + phosphate + 2 H(+). It participates in purine metabolism; AMP biosynthesis via de novo pathway; AMP from IMP: step 1/2. Its function is as follows. Plays an important role in the de novo pathway of purine nucleotide biosynthesis. Catalyzes the first committed step in the biosynthesis of AMP from IMP. This chain is Adenylosuccinate synthetase, found in Corynebacterium urealyticum (strain ATCC 43042 / DSM 7109).